The following is a 309-amino-acid chain: Universal stress protein E homolog (309 aa).

This sequence belongs to the universal stress protein A family.

It localises to the cytoplasm. Required for resistance to DNA-damaging agents. This chain is Universal stress protein E homolog (uspE), found in Haemophilus influenzae (strain ATCC 51907 / DSM 11121 / KW20 / Rd).